The sequence spans 194 residues: Peptidyl-tRNA hydrolase (194 aa).

Residue Y17 participates in tRNA binding. H22 serves as the catalytic Proton acceptor. F68, N70, and N116 together coordinate tRNA.

This sequence belongs to the PTH family. In terms of assembly, monomer.

It localises to the cytoplasm. The enzyme catalyses an N-acyl-L-alpha-aminoacyl-tRNA + H2O = an N-acyl-L-amino acid + a tRNA + H(+). Functionally, hydrolyzes ribosome-free peptidyl-tRNAs (with 1 or more amino acids incorporated), which drop off the ribosome during protein synthesis, or as a result of ribosome stalling. Its function is as follows. Catalyzes the release of premature peptidyl moieties from peptidyl-tRNA molecules trapped in stalled 50S ribosomal subunits, and thus maintains levels of free tRNAs and 50S ribosomes. In Shewanella sediminis (strain HAW-EB3), this protein is Peptidyl-tRNA hydrolase.